Here is a 269-residue protein sequence, read N- to C-terminus: Phosphonoacetaldehyde hydrolase (269 aa).

The Nucleophile role is filled by Asp-10. Mg(2+) contacts are provided by Asp-10 and Ala-12. Lys-52 serves as the catalytic Schiff-base intermediate with substrate. Asp-186 contributes to the Mg(2+) binding site.

This sequence belongs to the HAD-like hydrolase superfamily. PhnX family. As to quaternary structure, homodimer. Mg(2+) serves as cofactor.

It catalyses the reaction phosphonoacetaldehyde + H2O = acetaldehyde + phosphate + H(+). In terms of biological role, involved in phosphonate degradation. This is Phosphonoacetaldehyde hydrolase from Salmonella agona (strain SL483).